The sequence spans 150 residues: Troponin C, isotype gamma (150 aa).

Position 1 is an N-acetylmethionine (Met1). 4 consecutive EF-hand domains span residues 7 to 42 (EQLS…MGVK), 43 to 78 (ISEK…FLIE), 83 to 118 (ALKA…LDNR), and 119 to 150 (LTED…MMSG). Residues Asp56, Asp58, Ser60, Glu62, and Glu67 each coordinate Ca(2+). Residues Asp132, Asp134, Ser136, Thr138, and Glu143 each coordinate Ca(2+).

This sequence belongs to the troponin C family.

Functionally, troponin is the central regulatory protein of striated muscle contraction. Tn consists of three components: Tn-I which is the inhibitor of actomyosin ATPase, Tn-T which contains the binding site for tropomyosin and Tn-C. The binding of calcium to Tn-C abolishes the inhibitory action of Tn on actin filaments. The polypeptide is Troponin C, isotype gamma (Astacus leptodactylus (Turkish narrow-clawed crayfish)).